The primary structure comprises 334 residues: DNA-directed RNA polymerase subunit alpha (334 aa).

The alpha N-terminal domain (alpha-NTD) stretch occupies residues 1 to 232 (MVREEIAVST…IDLFIPFLHA (232 aa)). Positions 268 to 334 (GIALKCIFID…ILQKHFTIDC (67 aa)) are alpha C-terminal domain (alpha-CTD).

Belongs to the RNA polymerase alpha chain family. In plastids the minimal PEP RNA polymerase catalytic core is composed of four subunits: alpha, beta, beta', and beta''. When a (nuclear-encoded) sigma factor is associated with the core the holoenzyme is formed, which can initiate transcription.

Its subcellular location is the plastid. It localises to the chloroplast. The enzyme catalyses RNA(n) + a ribonucleoside 5'-triphosphate = RNA(n+1) + diphosphate. In terms of biological role, DNA-dependent RNA polymerase catalyzes the transcription of DNA into RNA using the four ribonucleoside triphosphates as substrates. This chain is DNA-directed RNA polymerase subunit alpha, found in Chloranthus spicatus (Chulantree).